A 299-amino-acid chain; its full sequence is HTH-type transcriptional regulator CynR (299 aa).

The HTH lysR-type domain maps to 1–58 (MLSRHINYFLAVAEHGSFTRAASALHVSQPALSQQIRQLEESLGVPLFDRSGRTIRLT). The segment at residues 18 to 37 (FTRAASALHVSQPALSQQIR) is a DNA-binding region (H-T-H motif).

The protein belongs to the LysR transcriptional regulatory family.

It localises to the cytoplasm. In terms of biological role, positively regulates the cynTSX operon, and negatively regulates its own transcription. Binds specifically to the cynR-cynTSX intergenic region. This Escherichia coli (strain K12) protein is HTH-type transcriptional regulator CynR (cynR).